The primary structure comprises 478 residues: Lysine histidine transporter-like 7 (478 aa).

Over 1 to 63 the chain is Cytoplasmic; it reads MSIALGNLFD…ITESRKGNVY (63 aa). The tract at residues 15 to 45 is disordered; sequence ESGGSPLFMSPAPSTDPQPISGEKNGGDGGR. A helical membrane pass occupies residues 64–86; it reads TATFHLLCSGIGLQVILLPAAFA. At 87–89 the chain is on the extracellular side; that stretch reads ALG. A helical transmembrane segment spans residues 90–112; that stretch reads WVWGTIILTVGFVWKLYTTWLLV. At 113–140 the chain is on the cytoplasmic side; sequence QLHEAVPGIRISRYVRLAIASFGVKLGK. A helical transmembrane segment spans residues 141–161; the sequence is LLGIFPVMYLSGGACTILVIT. At 162–177 the chain is on the extracellular side; it reads GGKSIQQLLQIMSDDN. The chain crosses the membrane as a helical span at residues 178-198; it reads TAPLTSVQCFLVFSCIAMIMS. Topologically, residues 199–205 are cytoplasmic; sequence QFPNLNS. Residues 206-226 form a helical membrane-spanning segment; the sequence is LFGVSLIGAFMGIAYCTVIWI. At 227 to 241 the chain is on the extracellular side; the sequence is LPVASDSQRTQVSVS. The helical transmembrane segment at 242–262 threads the bilayer; that stretch reads YATMDKSFVHIFNAIGLIALV. The Cytoplasmic segment spans residues 263-291; the sequence is YRGNNLVLEIQGTLPSDSKNPSCKTMWRA. A helical transmembrane segment spans residues 292–312; it reads VMISHALVAICMFPLTFAVYW. Topologically, residues 313–340 are extracellular; it reads AYGDKIPATGGPVGNYLKLYTQEHSKRA. Residues 341-361 traverse the membrane as a helical segment; the sequence is ACFIHLTFIFSCLCSYPINLM. The Cytoplasmic portion of the chain corresponds to 362–379; that stretch reads PACDNIEMVYITKKKKPA. The helical transmembrane segment at 380–402 threads the bilayer; that stretch reads SIIVRMMLRVFLSLVCFTIAVGF. At 403–406 the chain is on the extracellular side; sequence PFLP. The chain crosses the membrane as a helical span at residues 407–429; it reads YLAVLIGAIALLVTFTYPCFMWI. Residues 430–439 are Cytoplasmic-facing; that stretch reads SIKKPQRKSP. Residues 440–460 form a helical membrane-spanning segment; sequence MWLFNVLVGCLGASLSVLLLV. Residues 461–478 are Extracellular-facing; the sequence is ASAMRLAQKGLHANFFRP.

The protein belongs to the amino acid/polyamine transporter 2 family. Amino acid/auxin permease (AAAP) (TC 2.A.18.2) subfamily.

The protein resides in the cell membrane. Functionally, amino acid transporter. In Arabidopsis thaliana (Mouse-ear cress), this protein is Lysine histidine transporter-like 7.